Reading from the N-terminus, the 313-residue chain is Olfactory receptor 10Z1 (313 aa).

The Extracellular segment spans residues 1–25; that stretch reads MGQTNVTSWRDFVFLGFSSSGELQL. Asn-5 is a glycosylation site (N-linked (GlcNAc...) asparagine). A helical membrane pass occupies residues 26 to 46; sequence LLFALFLSLYLVTLTSNVFII. Residues 47 to 54 are Cytoplasmic-facing; sequence IAIRLDSH. Residues 55 to 75 form a helical membrane-spanning segment; sequence LHTPMYLFLSFLSFSETCYTL. The Extracellular segment spans residues 76 to 99; it reads GIIPRMLSGLAGGDQAISYVGCAA. Cys-97 and Cys-189 are disulfide-bonded. Residues 100 to 120 traverse the membrane as a helical segment; the sequence is QMFFSASWACTNCFLLAAMGF. The Cytoplasmic segment spans residues 121 to 139; it reads DRYVAICAPLHYASHMNPT. A helical membrane pass occupies residues 140-160; it reads LCAQLVITSFLTGYLFGLGMT. Residues 161 to 197 lie on the Extracellular side of the membrane; that stretch reads LVIFHLSFCSSHEIQHFFCDTPPVLSLACGDTGPSEL. The helical transmembrane segment at 198-217 threads the bilayer; sequence RIFILSLLVLLVSFFFITIS. The Cytoplasmic segment spans residues 218-237; sequence YAYILAAILRIPSAEGQKKA. A helical membrane pass occupies residues 238–258; the sequence is FSTCASHLTVVIIHYGCASFV. Over 259 to 271 the chain is Extracellular; it reads YLRPKASYSLERD. The helical transmembrane segment at 272–292 threads the bilayer; the sequence is QLIAMTYTVVTPLLNPIVYSL. The Cytoplasmic segment spans residues 293–313; sequence RNRAIQTALRNAFRGRLLGKG.

The protein belongs to the G-protein coupled receptor 1 family.

It is found in the cell membrane. Functionally, odorant receptor. The sequence is that of Olfactory receptor 10Z1 (OR10Z1) from Homo sapiens (Human).